Reading from the N-terminus, the 188-residue chain is Elongation factor P (188 aa).

Lys-34 is modified (N6-(3,6-diaminohexanoyl)-5-hydroxylysine).

This sequence belongs to the elongation factor P family. May be beta-lysylated on the epsilon-amino group of Lys-34 by the combined action of EpmA and EpmB, and then hydroxylated on the C5 position of the same residue by EpmC (if this protein is present). Lysylation is critical for the stimulatory effect of EF-P on peptide-bond formation. The lysylation moiety may extend toward the peptidyltransferase center and stabilize the terminal 3-CCA end of the tRNA. Hydroxylation of the C5 position on Lys-34 may allow additional potential stabilizing hydrogen-bond interactions with the P-tRNA.

Its subcellular location is the cytoplasm. The protein operates within protein biosynthesis; polypeptide chain elongation. Its function is as follows. Involved in peptide bond synthesis. Alleviates ribosome stalling that occurs when 3 or more consecutive Pro residues or the sequence PPG is present in a protein, possibly by augmenting the peptidyl transferase activity of the ribosome. Modification of Lys-34 is required for alleviation. The polypeptide is Elongation factor P (Haemophilus influenzae (strain 86-028NP)).